Consider the following 276-residue polypeptide: U6 snRNA phosphodiesterase 1 (276 aa).

The disordered stretch occupies residues 1–58 (MIVNYSSSSSEEESGSSSSPSGKRQKLDTETSEALDHGSAQRKVCKSSHLTPRLPLPE). Histidine 131 functions as the Proton acceptor in the catalytic mechanism. Residues 131-133 (HLS), tyrosine 213, and 215-221 (DPSFHIS) contribute to the AMP site. UMP contacts are provided by residues tyrosine 213 and 217 to 221 (SFHIS). Residue histidine 219 is the Proton donor of the active site.

The protein belongs to the 2H phosphoesterase superfamily. USB1 family.

It is found in the nucleus. It carries out the reaction a 3'-end uridylyl-uridine-RNA = a 3'-end 2',3'-cyclophospho-uridine-RNA + uridine. It catalyses the reaction a 3'-end uridylyl-adenosine-RNA = a 3'-end 2',3'-cyclophospho-uridine-RNA + adenosine. 3'-5' RNA exonuclease that trims the 3' end of oligo(U) and oligo(A) tracts of the pre-U6 small nuclear RNA (snRNA) molecule, leading to the formation of a mature U6 snRNA 3' end-terminated with a 2',3'-cyclic phosphate. Participates in the U6 snRNA 3' end processing that prevents U6 snRNA degradation. In addition also removes uridines from the 3' end of U6atac snRNA and possibly the vault RNA VTRNA1-1. In Danio rerio (Zebrafish), this protein is U6 snRNA phosphodiesterase 1.